Here is a 1529-residue protein sequence, read N- to C-terminus: ATP-dependent permease PDR15 (1529 aa).

The span at 1-13 (MSSDIRDVEERNS) shows a compositional bias: basic and acidic residues. Positions 1 to 38 (MSSDIRDVEERNSRSSSSSSSSNSAAQSIGQHPYRGFD) are disordered. Over 1–531 (MSSDIRDVEE…NFWRMKQSAS (531 aa)) the chain is Cytoplasmic. The span at 14-24 (RSSSSSSSSNS) shows a compositional bias: low complexity. Residues 171 to 420 (LRLLKPSKEE…FQDMGYYCPP (250 aa)) enclose the ABC transporter 1 domain. Residues 532–552 (VTLWQVIGNSVMAFILGSMFY) form a helical membrane-spanning segment. At 553 to 567 (KVMKKNDTSTFYFRG) the chain is on the extracellular side. Residue N558 is glycosylated (N-linked (GlcNAc...) asparagine). Residues 568–588 (AAMFFAILFNAFSCLLEIFSL) form a helical membrane-spanning segment. The Cytoplasmic portion of the chain corresponds to 589-617 (YETRPITEKHRTYSLYHPSADAFASVLSE). A helical membrane pass occupies residues 618–638 (MPPKLITAVCFNIIFYFLVDF). The Extracellular portion of the chain corresponds to 639–642 (RRNG). The helical transmembrane segment at 643-663 (GVFFFYFLINVIATFTLSHLF) threads the bilayer. Residues 664-699 (RCVGSLTKTLQEAMVPASMLLLAISMYTGFAIPKTK) are Cytoplasmic-facing. The chain crosses the membrane as a helical span at residues 700 to 720 (ILGWSIWIWYINPLAYLFESL). Residues 721-783 (MINEFHDRRF…YDYEHKHKWR (63 aa)) lie on the Extracellular side of the membrane. The N-linked (GlcNAc...) asparagine glycan is linked to N744. The chain crosses the membrane as a helical span at residues 784–804 (GFGIGMAYVVFFFFVYLILCE). Residues 805–1219 (YNEGAKQKGE…LFQQYWRSPD (415 aa)) are Cytoplasmic-facing. Over residues 829-840 (EGKLQEKHRPGD) the composition is skewed to basic and acidic residues. A disordered region spans residues 829 to 873 (EGKLQEKHRPGDIENNAGSSPDSATTEKKILDDSSEGSDSSSDNA). The ABC transporter 2 domain maps to 884–1127 (FHWRDLCYDV…MIDYFESKGA (244 aa)). ATP is bound at residue 920–927 (GASGAGKT). The chain crosses the membrane as a helical span at residues 1220–1240 (YLWSKFILTIFNQVFIGFTFF). The Extracellular segment spans residues 1241–1312 (KADRSLQGLQ…VEIPWNILAG (72 aa)). A helical membrane pass occupies residues 1313-1333 (TIAYCIYYYAVGFYANASAAG). At 1334–1340 (QLHERGA) the chain is on the cytoplasmic side. Residues 1341–1361 (LFWLFSIAFYVYIGSMGLLMI) traverse the membrane as a helical segment. Topologically, residues 1362 to 1368 (SFNEVAE) are extracellular. A helical membrane pass occupies residues 1369–1389 (TAAHMGTLLFTMALSFCGVMA). The Cytoplasmic portion of the chain corresponds to 1390–1396 (TPKVMPR). The helical transmembrane segment at 1397 to 1417 (FWIFMYRVSPLTYMIDALLAL) threads the bilayer. Over 1418–1492 (GVANVDVKCS…SSHYYRRWRN (75 aa)) the chain is Extracellular. The helical transmembrane segment at 1493 to 1513 (YGIFICYIAFDYIAATFLYWL) threads the bilayer. Over 1514 to 1529 (SRVPKKNGKISEKPKK) the chain is Cytoplasmic.

Belongs to the ABC transporter superfamily. ABCG family. PDR (TC 3.A.1.205) subfamily.

It is found in the membrane. This chain is ATP-dependent permease PDR15 (PDR15), found in Saccharomyces cerevisiae (strain ATCC 204508 / S288c) (Baker's yeast).